Reading from the N-terminus, the 229-residue chain is PHO85 cyclin-5 (229 aa).

Basic and acidic residues predominate over residues Met-1–Ser-24. Positions Met-1–Tyr-46 are disordered.

The protein belongs to the cyclin family. PCL1,2 subfamily. As to quaternary structure, forms a cyclin-CDK complex with PHO85.

Its function is as follows. Cyclin partner of the cyclin-dependent kinase (CDK) PHO85. Positively controls degradation of transcription factor GCN4 under favorable growth conditions. The PCL5-PHO85 cyclin-CDK holoenzyme phosphorylates GCN4, which is required for its degradation by the E3 ubiquitin ligase complex SCF(Cdc4). Amino acid starvation reduces PCL5-PHO85-associated GCN4 kinase activity and leads to stabilization of GCN4. This chain is PHO85 cyclin-5 (PCL5), found in Saccharomyces cerevisiae (strain ATCC 204508 / S288c) (Baker's yeast).